The chain runs to 361 residues: 3-galactosyl-N-acetylglucosaminide 4-alpha-L-fucosyltransferase FUT3 (361 aa).

Over 1–15 (MDPLGAAKPQWPWRR) the chain is Cytoplasmic. A helical; Signal-anchor for type II membrane protein membrane pass occupies residues 16-34 (CLAALLFQLLVAVCFFSYL). The Lumenal portion of the chain corresponds to 35–361 (RVSRDDATGS…TVRSIAAWFT (327 aa)). The segment at 39–58 (DDATGSPRAPSGSSRQDTTP) is disordered. N-linked (GlcNAc...) asparagine glycans are attached at residues Asn154 and Asn185.

It belongs to the glycosyltransferase 10 family. Post-translationally, glycosylated. As to expression, highly expressed in stomach, colon, small intestine, lung and kidney and to a lesser extent in salivary gland, bladder, uterus and liver.

Its subcellular location is the golgi apparatus. The protein localises to the golgi stack membrane. It carries out the reaction a beta-D-galactosyl-(1-&gt;3)-N-acetyl-beta-D-glucosaminyl derivative + GDP-beta-L-fucose = a beta-D-galactosyl-(1-&gt;3)-[alpha-L-fucosyl-(1-&gt;4)]-N-acetyl-beta-D-glucosaminyl derivative + GDP + H(+). The catalysed reaction is an N-acetyl-alpha-neuraminyl-(2-&gt;3)-beta-D-galactosyl-(1-&gt;4)-N-acetyl-beta-D-glucosaminyl derivative + GDP-beta-L-fucose = an alpha-Neu5Ac-(2-&gt;3)-beta-D-Gal-(1-&gt;4)-[alpha-L-Fuc-(1-&gt;3)]-beta-D-GlcNAc derivative + GDP + H(+). It catalyses the reaction a beta-D-galactosyl-(1-&gt;4)-N-acetyl-beta-D-glucosaminyl derivative + GDP-beta-L-fucose = a beta-D-galactosyl-(1-&gt;4)-[alpha-L-fucosyl-(1-&gt;3)]-N-acetyl-beta-D-glucosaminyl derivative + GDP + H(+). The enzyme catalyses an alpha-Neu5Ac-(2-&gt;3)-beta-D-Gal-(1-&gt;4)-beta-D-GlcNAc-(1-&gt;3)-beta-D-Gal-(1-&gt;4)-[alpha-L-Fuc-(1-&gt;3)]-beta-D-GlcNAc derivative + GDP-beta-L-fucose = an alpha-Neu5Ac-(2-&gt;3)-beta-D-Gal-(1-&gt;4)-[alpha-L-Fuc-(1-&gt;3)]-beta-D-GlcNAc-(1-&gt;3)-beta-D-Gal-(1-&gt;4)-[alpha-L-Fuc-(1-&gt;3)]-beta-D-GlcNAc derivative + GDP + H(+). It carries out the reaction Lc4Cer + GDP-beta-L-fucose = a lactoside III(4)-a-Fuc-Lc4Cer + GDP + H(+). The catalysed reaction is a beta-D-Gal-(1-&gt;3)-beta-D-GlcNAc-(1-&gt;3)-beta-D-Gal-(1-&gt;4)-beta-D-Glc-(1&lt;-&gt;1')-Cer(d18:1(4E)) + GDP-beta-L-fucose = a III(4)-a-Fuc-Lc4Cer(d18:1(4E)) + GDP + H(+). It catalyses the reaction N-acetyl-alpha-neuraminosyl-(2-&gt;3)-beta-D-galactosyl-(1-&gt;3)-[N-acetyl-alpha-neuraminosyl-(2-&gt;6)]-N-acetyl-beta-D-glucosaminyl-(1-&gt;3)-beta-D-galactosyl-(1-&gt;4)-beta-D-glucosyl-(1&lt;-&gt;1')-N-acyl-sphing-4-enine + GDP-beta-L-fucose = N-acetyl-alpha-neuraminosyl-(2-&gt;3)-beta-D-galactosyl-(1-&gt;3)-alpha-L-fucosyl-(1-&gt;4)-[N-acetyl-alpha-neuraminosyl-(2-&gt;6)-N-acetyl-beta-D-glucosaminyl-(1-&gt;3)]-beta-D-galactosyl-(1-&gt;4)-beta-D-glucosyl-(1&lt;-&gt;1')-N-acyl-sphing-4-enine + GDP + H(+). The enzyme catalyses N-acetyl-alpha-neuraminosyl-(2-&gt;3)-beta-D-galactosyl-(1-&gt;3)-N-acetyl-beta-D-glucosaminyl-(1-&gt;3)-beta-D-galactosyl-(1-&gt;4)-beta-D-glucosyl-(1&lt;-&gt;1')-N-acyl-sphing-4-enine + GDP-beta-L-fucose = N-acetyl-alpha-neuraminosyl-(2-&gt;3)-beta-D-galactosyl-(1-&gt;3)-alpha-L-fucosyl-(1-&gt;4)-[N-acetyl-beta-D-glucosaminyl-(1-&gt;3)]-beta-D-galactosyl-(1-&gt;4)-beta-D-glucosyl-(1&lt;-&gt;1')-N-acyl-sphing-4-enine + GDP + H(+). It carries out the reaction beta-D-galactosyl-(1-&gt;3)-N-acetyl-D-glucosamine + GDP-beta-L-fucose = beta-D-galactosyl-(1-&gt;3)-[alpha-L-fucosyl-(1-&gt;4)]-N-acetyl-D-glucosamine + GDP + H(+). The catalysed reaction is alpha-L-Fuc-(1-&gt;2)-beta-D-Gal-(1-&gt;3)-D-GlcNAc + GDP-beta-L-fucose = alpha-L-Fuc-(1-&gt;2)-beta-D-Gal-(1-&gt;3)-[alpha-L-Fuc-(1-&gt;4)]-D-GlcNAc + GDP + H(+). It catalyses the reaction alpha-L-Fuc-(1-&gt;2)-beta-D-Gal-(1-&gt;4)-D-GlcNAc + GDP-beta-L-fucose = alpha-L-Fuc-(1-&gt;2)-beta-D-Gal-(1-&gt;4)-[alpha-L-Fuc-(1-&gt;3)]-D-GlcNAc + GDP + H(+). The enzyme catalyses beta-D-galactosyl-(1-&gt;4)-N-acetyl-D-glucosamine + GDP-beta-L-fucose = beta-D-galactosyl-(1-&gt;4)-[alpha-L-fucosyl-(1-&gt;3)]-N-acetyl-D-glucosamine + GDP + H(+). It carries out the reaction lactose + GDP-beta-L-fucose = beta-D-galactosyl-(1-&gt;4)-[alpha-L-fucosyl-(1-&gt;3)]-D-glucose + GDP + H(+). The catalysed reaction is an alpha-Neu5Ac-(2-&gt;3)-beta-D-Gal-(1-&gt;3)-D-GlcNAc derivative + GDP-beta-L-fucose = an alpha-Neu5Ac-(2-&gt;3)-beta-D-Gal-(1-&gt;3)-[alpha-L-Fuc-(1-&gt;4)]-beta-D-GlcNAc derivative + GDP + H(+). The protein operates within protein modification; protein glycosylation. Functionally, catalyzes the transfer of L-fucose, from a guanosine diphosphate-beta-L-fucose, to both the subterminal N-acetyl glucosamine (GlcNAc) of type 1 chain (beta-D-Gal-(1-&gt;3)-beta-D-GlcNAc) glycolipids and oligosaccharides via an alpha(1,4) linkage, and the subterminal glucose (Glc) or GlcNAc of type 2 chain (beta-D-Gal-(1-&gt;4)-beta-D-GlcNAc) oligosaccharides via an alpha(1,3) linkage, independently of the presence of terminal alpha-L-fucosyl-(1,2) moieties on the terminal galactose of these acceptors. Through its catalytic activity, participates in the synthesis of antigens of the Lewis blood group system, i.e. Lewis a (Le(a)), lewis b (Le(b)), Lewis x/SSEA-1 (Le(x)) and lewis y (Le(y)) antigens. Also catalyzes the transfer of L-fucose to subterminal GlcNAc of sialyl- and disialyl-lactotetraosylceramide to produce sialyl Lewis a (sLe(a)) and disialyl Lewis a via an alpha(1,4) linkage and therefore may regulate cell surface sLe(a) expression and consequently regulates adhesive properties to E-selectin, cell proliferation and migration. Catalyzes the transfer of an L-fucose to 3'-sialyl-N-acetyllactosamine by an alpha(1,3) linkage, which allows the formation of sialyl-Lewis x structure and therefore may regulate the sialyl-Lewis x surface antigen expression and consequently adhesive properties to E-selectin. Prefers type 1 chain over type 2 acceptors. Type 1 tetrasaccharide is a better acceptor than type 1 disaccharide suggesting that a beta anomeric configuration of GlcNAc in the substrate is preferred. Lewis-positive (Le(+)) individuals have an active enzyme while Lewis-negative (Le(-)) individuals have an inactive enzyme. This chain is 3-galactosyl-N-acetylglucosaminide 4-alpha-L-fucosyltransferase FUT3, found in Homo sapiens (Human).